A 215-amino-acid chain; its full sequence is Nascent polypeptide-associated complex subunit alpha (215 aa).

The tract at residues Met-1–Ser-81 is disordered. A compositionally biased stretch (polar residues) spans Val-9–Val-21. Over residues Ser-29–Asp-42 the composition is skewed to acidic residues. The segment covering Ser-43–Ala-57 has biased composition (low complexity). In terms of domain architecture, NAC-A/B spans Ser-70 to Ala-135. The 38-residue stretch at Val-176–Leu-213 folds into the UBA domain.

It belongs to the NAC-alpha family.

May promote appropriate targeting of ribosome-nascent polypeptide complexes. The polypeptide is Nascent polypeptide-associated complex subunit alpha (naca) (Oreochromis niloticus (Nile tilapia)).